A 248-amino-acid polypeptide reads, in one-letter code: Triosephosphate isomerase (248 aa).

Substrate is bound at residue 9-11 (NWK). The Electrophile role is filled by H94. The active-site Proton acceptor is E164. Substrate-binding positions include G170, S209, and 230-231 (GG).

The protein belongs to the triosephosphate isomerase family. As to quaternary structure, homodimer.

It is found in the cytoplasm. It carries out the reaction D-glyceraldehyde 3-phosphate = dihydroxyacetone phosphate. Its pathway is carbohydrate biosynthesis; gluconeogenesis. It participates in carbohydrate degradation; glycolysis; D-glyceraldehyde 3-phosphate from glycerone phosphate: step 1/1. Involved in the gluconeogenesis. Catalyzes stereospecifically the conversion of dihydroxyacetone phosphate (DHAP) to D-glyceraldehyde-3-phosphate (G3P). The protein is Triosephosphate isomerase of Hahella chejuensis (strain KCTC 2396).